The primary structure comprises 481 residues: Probable glycine dehydrogenase (decarboxylating) subunit 2 (481 aa).

A disordered region spans residues 1-23 (MVIFEKTRGKNSPSVMPSKKGDV). At Lys-263 the chain carries N6-(pyridoxal phosphate)lysine.

Belongs to the GcvP family. C-terminal subunit subfamily. In terms of assembly, the glycine cleavage system is composed of four proteins: P, T, L and H. In this organism, the P 'protein' is a heterodimer of two subunits. The cofactor is pyridoxal 5'-phosphate.

The catalysed reaction is N(6)-[(R)-lipoyl]-L-lysyl-[glycine-cleavage complex H protein] + glycine + H(+) = N(6)-[(R)-S(8)-aminomethyldihydrolipoyl]-L-lysyl-[glycine-cleavage complex H protein] + CO2. Functionally, the glycine cleavage system catalyzes the degradation of glycine. The P protein binds the alpha-amino group of glycine through its pyridoxal phosphate cofactor; CO(2) is released and the remaining methylamine moiety is then transferred to the lipoamide cofactor of the H protein. The chain is Probable glycine dehydrogenase (decarboxylating) subunit 2 from Francisella philomiragia subsp. philomiragia (strain ATCC 25017 / CCUG 19701 / FSC 153 / O#319-036).